Here is a 193-residue protein sequence, read N- to C-terminus: Ion-translocating oxidoreductase complex subunit B (193 aa).

The segment at 1–26 (MSTMLIAVILLTLLALFFGVLLGFAA) is hydrophobic. Residues 32 to 90 (EGNPIVDELEAILPQTQCGQCGYPGCRPYAEAIANGDKVNKCPPGGTATMEKLASLMGV) form the 4Fe-4S domain. Positions 49, 52, 57, 73, 114, 117, 120, 124, 144, 147, 150, and 154 each coordinate [4Fe-4S] cluster. 2 4Fe-4S ferredoxin-type domains span residues 105 to 134 (KVAY…GAGK) and 136 to 164 (MHTV…MVPV).

It belongs to the 4Fe4S bacterial-type ferredoxin family. RnfB subfamily. As to quaternary structure, the complex is composed of six subunits: RnfA, RnfB, RnfC, RnfD, RnfE and RnfG. [4Fe-4S] cluster serves as cofactor.

Its subcellular location is the cell inner membrane. Its function is as follows. Part of a membrane-bound complex that couples electron transfer with translocation of ions across the membrane. The protein is Ion-translocating oxidoreductase complex subunit B of Shewanella oneidensis (strain ATCC 700550 / JCM 31522 / CIP 106686 / LMG 19005 / NCIMB 14063 / MR-1).